We begin with the raw amino-acid sequence, 200 residues long: Glycerol-3-phosphate acyltransferase (200 aa).

5 helical membrane-spanning segments follow: residues 3-23 (YIYSIFIGYFFGAIPFSFFIA), 50-70 (FYGALAFFFDIFKAYIAVFLV), 75-95 (IKFMLIAGTMAVLGHCYSIFL), 109-129 (VFLAVYPWSGLVFFGVWLFIV), and 134-154 (YVSLASMIGLIFASIFVFFAG).

Belongs to the PlsY family. Probably interacts with PlsX.

Its subcellular location is the cell inner membrane. It catalyses the reaction an acyl phosphate + sn-glycerol 3-phosphate = a 1-acyl-sn-glycero-3-phosphate + phosphate. It functions in the pathway lipid metabolism; phospholipid metabolism. Catalyzes the transfer of an acyl group from acyl-phosphate (acyl-PO(4)) to glycerol-3-phosphate (G3P) to form lysophosphatidic acid (LPA). This enzyme utilizes acyl-phosphate as fatty acyl donor, but not acyl-CoA or acyl-ACP. The protein is Glycerol-3-phosphate acyltransferase of Thermosipho melanesiensis (strain DSM 12029 / CIP 104789 / BI429).